Consider the following 449-residue polypeptide: uncharacterized protein (449 aa).

Disordered regions lie at residues 1-58 and 71-125; these read MVKR…SLSS and EALE…VVEL. Basic and acidic residues predominate over residues 30-46; sequence KQRDELREKQKRKREDS. The segment covering 103–124 has biased composition (acidic residues); that stretch reads SDDDDDDNEEEDDNGFEDQVVE.

Belongs to the bystin family.

This is an uncharacterized protein from Caenorhabditis elegans.